A 2083-amino-acid polypeptide reads, in one-letter code: MGSIQQDDVHNQIDHCNQSDDLPAARLNCNDVELFEVAGLACDETSSPTGMRDEMVLLSWLIALLRTREGGQIRYEWAYRYPEEEPVPRCLAMNEVVAGLQSSVKETAAAVSRHISADVSSPPAPASLLLSTSSLSQTSDEAKDEGLLHLEIAFENGLCKIRPTWHSENMLPFTVTRYARTLIDTVRLCISNCDAAIQDCLRPTAYDLDEIWRWNHNLPPTYNFCMHEIISDQAQKFPDKEAIASWDGSLTYRQIDQYSSFVARSLIGMGVGLHDVLPVCFEKSRWTIVAVLAVMKAGATFVLMDPTLPLARLQNMAQQVGAKMMVSSRGQYNLATEIIPNANVLVVEENTFSSLSAEQNGEPLPTVPSSALMYMIFTSGSTGTPKGVKISHETYTSSAIPRANAVGYTEDSRVLDFASYAFDVSIDSMLLTLGNGGCLCIPSDEDRLNDINGVIRRMKVNYAGLTPSVARILDADVISSLSGLGLGGEAVSARDVNLWGQDTRIIIGYGPCECTIGCTVNSSAATGRDYISIGPGNGAVIWIVDPNDHESLVPLGAVGELLVEGPIVGQGYLNDPEKTAAAFIEDPSWLVAGHEGYPGRRGRLYKTGDLGRYDPDGSGGIVFVGRKDTQVKLRGQRVELGEIESQLRARLPSETTVIAEVIVPQGSGGQPTLVAFVAAQTTKGHDHTGLEAAELPDELRRALSEADAELAKVLPRYMVPTAYIPVNHIPTLISGKTDRKRLRQFGATVDLRQLDQDATNTAARELSDLERRLRQAWSQTLKLQACSIRLQDNFFALGGDSLTAMKLVSVCRSQGLDLSVTSMFSNPTLSAMASVVRICDVDVQRTVPAFSMITSDMNSACVEAAEPCGVGPADIEDIYPCTPTQESLFTFSLKSVKPYVAQRVLCIPSHIDLNAWRKAWEDVVAALPILRTRVAQLQEPGLQQVVLKNSISWTQASDLAEYLENDRTQKMNLGESLARYAIVEDSADGKRYMVWTIHHVLYDGWSEPIILKQVSDALQGQPVEVKAQMRDFVRFVRDSDDAAVQEFWRRELKGAVGPQFPRLPSRDFMPTPDALVERQVSLDTSSGSPFTMATLIRGAWALVASQYTGSDDIVFGETLTGRDIPLPGVESIVGPLIATVPIRVRILRGSTVESYLQAVQQSVLARTPYQHLGMQNIRKVSQDAQHACETGTGLVIQPEPEYVGSELGVERGDVVLEALHFNPYPLMLACGIRKGGFRVCASFDSSLIETRQMERMLAQLETACWQLSQGLSRKVDEISCLPEAELNQIWQWNRSPPLSLDETTSRLRANASTKPGSSYPPAVVPWVCSPRNSSLLSPIGCVGELWLEGALLSGDTVDSPAWLVAGSSTCAGRTGKVQATGDMVQLREDGSLVFVGRKENVVPVQGHAVDITEIERHLAEHLPPTIRAAATVVRSSSDQELVMFIEQPAAEEACIELLSEKREIVCDAPDKAFQTTICATIPGSLAAVLKKLDKYMRDSLPSYMAPSAYIVVEKLPNTMDDIDHNLLNQIASQVTPQILNELRDGLSNAWTKATAPNHLSASESILRSAWAKVLRVDPEQIDVDDNFFRRGGDSVLAMKLVSSLRAQGYSLSVADIFRHMRLSDAARVMKVDERSTEKINSYQPFSMLRLPDVQQFLANIVRPQLGDQHWPIRDVLPVTDSQDMDIRATIQPPRTSIQYTMLYFDNSVDRERLFRSCSDLVKTHEILRTVFISHESSFLQVVLNELEIPVRAHKTDKQLDQYVASLFREDIESNFQLGCPFLRLFYVEGNNGESCLVIGLSHAQYDGVSLPRLLQDLDALYTGTQLATFSPFSLYMAQTSEEAIQNKAAAYWRNLLSSSSLSTLDGPSSDPTDKAIFHTRPVNIHPLKEITTANLLTAAWAMVLARRLQTPDVTFGSVTSGRTLDIPNAENFMGPCYQLTPVRVPFHPDWTASDLLNFVQTQSAESAAHDFLGFEKIAKLAGWASGRQGFDSIVHHQDWEDFDMMPFGGGSCRVDIANPHGDAAYPVKAVSFVKEGEIHVGVVCSERDVMFVDEVLGELAAAVVELAGQSTEVLLDSKLFSGQ.

Residues 251 to 650 form an adenylation 1 region; that stretch reads TYRQIDQYSS…GEIESQLRAR (400 aa). A Carrier 1 domain is found at 764-840; sequence RELSDLERRL…AMASVVRICD (77 aa). At serine 801 the chain carries O-(pantetheine 4'-phosphoryl)serine. The interval 876–1146 is condensation 1; the sequence is EDIYPCTPTQ…IATVPIRVRI (271 aa). Residues 1336–1421 are adenylation 2; it reads LSPIGCVGEL…TEIERHLAEH (86 aa). In terms of domain architecture, Carrier 2 spans 1557 to 1633; that stretch reads NHLSASESIL…DAARVMKVDE (77 aa). Serine 1594 carries the O-(pantetheine 4'-phosphoryl)serine modification. Residues 1674–1946 form a condensation 2 region; it reads DVLPVTDSQD…YQLTPVRVPF (273 aa).

The protein belongs to the NRP synthetase family.

The protein operates within siderophore biosynthesis. Functionally, nonribosomal peptide synthetase; part of the siderophore biosynthetic pathway. Aspergillus fumigatus produces four types of siderophores, low-molecular-mass iron chelators, including excreted fusarinine C (FsC) and triacetylfusarinine C (TAFC) for iron uptake; and intacellular ferricrocin (FC) for hyphal and hydroxyferricrocin (HFC) for conidial iron distribution and storage. TAFC consists of three N(2)-acetyl-N(5)-anhydromevalonyl-N(5)-hydroxyornithine residues cyclically linked by ester bonds; FC is a cyclic hexapeptide with the structure Gly-Ser-Gly-(N(5)-acetyl-N(5)-hydroxyornithine)x3. The biosynthesis of all four siderophores depends on the hydroxylation of ornithine, catalyzed by the monooxygenase sidA. Subsequently, the pathways for biosynthesis of extra- and intracellular siderophores split. For biosynthesis of extracellular siderophores, the transacylase sidF transfers anhydromevalonyl to N(5)-hydroxyornithine. The required anhydromevalonyl-CoA moiety is derived from mevalonate by CoA ligation and dehydration catalyzed by sidI and sidH respectively. The acetylation of N(5)-hydroxyornithine for FC biosynthesis involves the constitutively expressed sidL. FC is hydroxylated to HFC by an as yet uncharacterized enzyme during conidiation. Assembly of fusarinine C (FsC) and FC is catalyzed by two different nonribosomal peptide synthetases (NRPS), sidD and sidC respectively. Subsequently, sidG catalyzes N2-acetylation of FsC for forming TAFC. Both extra- and intracellular siderophores are crucial for growth during iron limitation and virulence. This is Nonribosomal peptide synthetase sidD from Aspergillus fumigatus (strain ATCC MYA-4609 / CBS 101355 / FGSC A1100 / Af293) (Neosartorya fumigata).